The chain runs to 932 residues: Myelin gene regulatory factor-like A (932 aa).

Composition is skewed to low complexity over residues 1 to 19 (MDGYNQQQQQQQQQQQQHQ) and 33 to 48 (QQQQQQQQQQQQQQQQ). 7 disordered regions span residues 1 to 63 (MDGY…ISNG), 152 to 256 (VNSP…LSSS), 269 to 328 (TNTQ…NENP), 540 to 568 (VTPPGDLSPVHTPDYAGTSSNNGGGSNNM), 582 to 601 (TMNIVSPGHSPTSPRPLSQL), 613 to 660 (TQNH…NNNN), and 680 to 726 (NINN…CHWN). The segment covering 49-59 (PMNGSNNQLLG) has biased composition (polar residues). The stretch at 127 to 154 (LDSSFLMLQQQLQDQQQQIAQFNSSVNS) forms a coiled coil. Low complexity-rich tracts occupy residues 152 to 249 (VNSP…ANNT) and 277 to 294 (PRSISPNPSPNLSPTNSP). The NDT80 DNA-binding region spans 286–546 (PNLSPTNSPI…ATQVTPPGDL (261 aa)). A compositionally biased stretch (polar residues) spans 311-328 (ENENSDPPSPMTQYNENP). Low complexity-rich tracts occupy residues 615–660 (NHNN…NNNN) and 680–721 (NINN…NNNN). The region spanning 767 to 877 (SDLRIKYDLK…KQMDEMKLKL (111 aa)) is the Peptidase S74 domain. A coiled-coil region spans residues 863–895 (TQELSKQMDEMKLKLITYESKLKNLKKKSKNQT). A helical transmembrane segment spans residues 895–915 (TILLIIFMITFLLVALYMYKP).

It localises to the membrane. Its function is as follows. Transcription factor which acts as a key regulator of pstA (prestalk-A) cells differentiation. Essential for ecmA-specific gene expression. This chain is Myelin gene regulatory factor-like A (mrfA), found in Dictyostelium discoideum (Social amoeba).